We begin with the raw amino-acid sequence, 407 residues long: BTB/POZ and MATH domain-containing protein 1 (407 aa).

An MATH domain is found at 33–167 (NGFHEFKICG…ENSLLVRCRV (135 aa)). Positions 203-270 (CDVVFQVDGE…IYWDELPDMQ (68 aa)) constitute a BTB domain.

Belongs to the Tdpoz family. Homodimer or heterodimer with BPM3, BPM5 and BPM6. Interacts with CUL3A and CUL3B. Interacts with RAP2-4 and RAP2-13. Binds to MYB56 at the promoter of FLOWERING LOCUS T (FT). Ubiquitous.

The protein localises to the nucleus. Its pathway is protein modification; protein ubiquitination. Functionally, may act as a substrate-specific adapter of an E3 ubiquitin-protein ligase complex (CUL3-RBX1-BTB) which mediates the ubiquitination and subsequent proteasomal degradation of target proteins. The polypeptide is BTB/POZ and MATH domain-containing protein 1 (BPM1) (Arabidopsis thaliana (Mouse-ear cress)).